Here is a 398-residue protein sequence, read N- to C-terminus: 1-deoxy-D-xylulose 5-phosphate reductoisomerase (398 aa).

8 residues coordinate NADPH: Thr-10, Gly-11, Ser-12, Ile-13, Gly-36, Arg-37, Asn-38, and Asn-124. 1-deoxy-D-xylulose 5-phosphate is bound at residue Lys-125. Glu-126 serves as a coordination point for NADPH. Position 150 (Asp-150) interacts with Mn(2+). Positions 151, 152, 186, and 209 each coordinate 1-deoxy-D-xylulose 5-phosphate. Glu-152 provides a ligand contact to Mn(2+). NADPH is bound at residue Gly-215. 4 residues coordinate 1-deoxy-D-xylulose 5-phosphate: Ser-222, Asn-227, Lys-228, and Glu-231. Glu-231 contacts Mn(2+).

Belongs to the DXR family. Homodimer. It depends on Mg(2+) as a cofactor. Mn(2+) is required as a cofactor.

It carries out the reaction 2-C-methyl-D-erythritol 4-phosphate + NADP(+) = 1-deoxy-D-xylulose 5-phosphate + NADPH + H(+). It participates in isoprenoid biosynthesis; isopentenyl diphosphate biosynthesis via DXP pathway; isopentenyl diphosphate from 1-deoxy-D-xylulose 5-phosphate: step 1/6. Catalyzes the NADPH-dependent rearrangement and reduction of 1-deoxy-D-xylulose-5-phosphate (DXP) to 2-C-methyl-D-erythritol 4-phosphate (MEP). The chain is 1-deoxy-D-xylulose 5-phosphate reductoisomerase from Yersinia enterocolitica serotype O:8 / biotype 1B (strain NCTC 13174 / 8081).